The chain runs to 108 residues: Class I hydrophobin eas (108 aa).

The N-terminal stretch at 1–26 (MQFTSVFTILAIAMTAAAAPAEVVPR) is a signal peptide. 4 cysteine pairs are disulfide-bonded: C35–C86, C44–C80, C45–C71, and C87–C106.

Belongs to the fungal hydrophobin family. In terms of assembly, self-assembles to form functional amyloid fibrils called rodlets. Self-assembly into fibrillar rodlets occurs spontaneously at hydrophobic:hydrophilic interfaces and the rodlets further associate laterally to form amphipathic monolayers.

The protein localises to the secreted. The protein resides in the spore wall. Aerial growth, conidiation, and dispersal of filamentous fungi in the environment rely upon a capability of their secreting small amphipathic proteins called hydrophobins (HPBs) with low sequence identity. Class I can self-assemble into an outermost layer of rodlet bundles on aerial cell surfaces, conferring cellular hydrophobicity that supports fungal growth, development and dispersal; whereas class II form highly ordered films at water-air interfaces through intermolecular interactions but contribute nothing to the rodlet structure. Eas is a class I hydrophobin that forms functional amyloid fibrils called rodlets that facilitate spore formation and dispersal. The protein is Class I hydrophobin eas of Neurospora crassa (strain ATCC 24698 / 74-OR23-1A / CBS 708.71 / DSM 1257 / FGSC 987).